An 89-amino-acid polypeptide reads, in one-letter code: Small ribosomal subunit protein uS15 (89 aa).

It belongs to the universal ribosomal protein uS15 family. As to quaternary structure, part of the 30S ribosomal subunit. Forms a bridge to the 50S subunit in the 70S ribosome, contacting the 23S rRNA.

One of the primary rRNA binding proteins, it binds directly to 16S rRNA where it helps nucleate assembly of the platform of the 30S subunit by binding and bridging several RNA helices of the 16S rRNA. Its function is as follows. Forms an intersubunit bridge (bridge B4) with the 23S rRNA of the 50S subunit in the ribosome. In Pasteurella multocida (strain Pm70), this protein is Small ribosomal subunit protein uS15.